We begin with the raw amino-acid sequence, 129 residues long: NADH-quinone oxidoreductase subunit A (129 aa).

The next 3 membrane-spanning stretches (helical) occupy residues 14 to 34, 67 to 87, and 95 to 115; these read LAIH…VAAW, FLIA…FAWA, and WLGL…LVYL.

It belongs to the complex I subunit 3 family. As to quaternary structure, NDH-1 is composed of 14 different subunits. Subunits NuoA, H, J, K, L, M, N constitute the membrane sector of the complex.

The protein resides in the cell inner membrane. It catalyses the reaction a quinone + NADH + 5 H(+)(in) = a quinol + NAD(+) + 4 H(+)(out). Its function is as follows. NDH-1 shuttles electrons from NADH, via FMN and iron-sulfur (Fe-S) centers, to quinones in the respiratory chain. The immediate electron acceptor for the enzyme in this species is believed to be ubiquinone. Couples the redox reaction to proton translocation (for every two electrons transferred, four hydrogen ions are translocated across the cytoplasmic membrane), and thus conserves the redox energy in a proton gradient. The sequence is that of NADH-quinone oxidoreductase subunit A from Rhodopseudomonas palustris (strain ATCC BAA-98 / CGA009).